The chain runs to 507 residues: Protein DETOXIFICATION 41 (507 aa).

Residues 1 to 62 lie on the Cytoplasmic side of the membrane; sequence MSSTETYEPL…KLLWTLSGAS (62 aa). Residues 63–83 traverse the membrane as a helical segment; the sequence is IVVSVLNYMLSFVTVMFTGHL. Topologically, residues 84-92 are vacuolar; it reads GSLQLAGAS. Residues 93-113 form a helical membrane-spanning segment; it reads IATVGIQGLAYGIMLGMASAV. Residues 114–137 lie on the Cytoplasmic side of the membrane; sequence QTVCGQAYGARQYSSMGIICQRAM. The helical transmembrane segment at 138–158 threads the bilayer; that stretch reads VLHLAAAVFLTFLYWYSGPIL. The Vacuolar portion of the chain corresponds to 159–170; that stretch reads KTMGQSVAIAHE. The chain crosses the membrane as a helical span at residues 171-191; sequence GQIFARGMIPQIYAFALACPM. The Cytoplasmic segment spans residues 192-202; sequence QRFLQAQNIVN. The helical transmembrane segment at 203–223 threads the bilayer; it reads PLAYMSLGVFLLHTLLTWLVT. Residue N224 is a topological domain, vacuolar. A helical membrane pass occupies residues 225 to 245; that stretch reads VLDFGLLGAALILSFSWWLLV. The Cytoplasmic portion of the chain corresponds to 246–283; the sequence is AVNGMYILMSPNCKETWTGFSTRAFRGIWPYFKLTVAS. A helical transmembrane segment spans residues 284-304; the sequence is AVMLCLEIWYNQGLVIISGLL. Over 305 to 312 the chain is Vacuolar; that stretch reads SNPTISLD. Residues 313–333 form a helical membrane-spanning segment; that stretch reads AISICMYYLNWDMQFMLGLSA. The Cytoplasmic portion of the chain corresponds to 334-355; the sequence is AISVRVSNELGAGNPRVAMLSV. Residues 356-376 form a helical membrane-spanning segment; it reads VVVNITTVLISSVLCVIVLVF. At 377 to 389 the chain is on the vacuolar side; the sequence is RVGLSKAFTSDAE. Residues 390–410 traverse the membrane as a helical segment; sequence VIAAVSDLFPLLAVSIFLNGI. The Cytoplasmic segment spans residues 411 to 425; that stretch reads QPILSGVAIGSGWQA. The chain crosses the membrane as a helical span at residues 426–446; it reads VVAYVNLVTYYVIGLPIGCVL. Residues 447 to 453 lie on the Vacuolar side of the membrane; the sequence is GFKTSLG. A helical membrane pass occupies residues 454-474; sequence VAGIWWGMIAGVILQTLTLIV. Residues 475–507 are Cytoplasmic-facing; it reads LTLKTNWTSEVENAAQRVKTSATENQEMANAGV.

It belongs to the multi antimicrobial extrusion (MATE) (TC 2.A.66.1) family. As to expression, expressed in reproductive tissues, from buds to siliques. Restricted to the endothelium layer of the ovule and the seed coat.

It is found in the vacuole membrane. The protein operates within secondary metabolite biosynthesis; flavonoid biosynthesis. Functionally, acts as a flavonoid/H(+)-antiporter that control the vacuolar sequestration of flavonoids in the seed coat endothelium. Could transport the anthocyanin cyanidin-3-O-glucoside and epicatechin 3'-O-glucoside in vitro. The chain is Protein DETOXIFICATION 41 from Arabidopsis thaliana (Mouse-ear cress).